We begin with the raw amino-acid sequence, 305 residues long: Methionyl-tRNA formyltransferase (305 aa).

Residue S108 to P111 coordinates (6S)-5,6,7,8-tetrahydrofolate.

It belongs to the Fmt family.

The catalysed reaction is L-methionyl-tRNA(fMet) + (6R)-10-formyltetrahydrofolate = N-formyl-L-methionyl-tRNA(fMet) + (6S)-5,6,7,8-tetrahydrofolate + H(+). In terms of biological role, attaches a formyl group to the free amino group of methionyl-tRNA(fMet). The formyl group appears to play a dual role in the initiator identity of N-formylmethionyl-tRNA by promoting its recognition by IF2 and preventing the misappropriation of this tRNA by the elongation apparatus. In Clavibacter sepedonicus (Clavibacter michiganensis subsp. sepedonicus), this protein is Methionyl-tRNA formyltransferase.